The chain runs to 224 residues: Non-structural protein V (224 aa).

A compositionally biased stretch (polar residues) spans Gln-54 to Gln-65. 2 disordered regions span residues Gln-54 to Pro-94 and Thr-150 to Arg-172. Residues His-170, Cys-189, Cys-193, Cys-205, Cys-207, Cys-210, Cys-214, and Cys-217 each coordinate Zn(2+).

It belongs to the paramyxoviruses V protein family. Interacts with host IFIH1/MDA5 and DHX58/LGP2. Forms with host DDB1, CUL4A, STAT1, STAT2 and STAT3 the mumps virus V-dependent complex (VDC).

The protein resides in the virion. The protein localises to the host cytoplasm. Plays an essential role in the inhibition of host immune response. Prevents the establishment of cellular antiviral state by blocking interferon-alpha/beta (IFN-alpha/beta) production and signaling pathway. Interacts with host IFIH1/MDA5 and DHX58/LGP2 to inhibit the transduction pathway involved in the activation of IFN-beta promoter, thus protecting the virus against cell antiviral state. Blocks the type I and II interferon signaling pathways by interacting with host STAT1, STAT2 and STAT3, and mediating their ubiquitination and subsequent proteasomal degradation. The sequence is that of Non-structural protein V from Homo sapiens (Human).